Consider the following 125-residue polypeptide: uncharacterized protein (125 aa).

This is an uncharacterized protein from Bacillus subtilis (strain 168).